Consider the following 649-residue polypeptide: Putative calpain-like cysteine protease A (649 aa).

A propeptide spanning residues 1–3 (MLT) is cleaved from the precursor. Disordered regions lie at residues 1–22 (MLTT…SSPS) and 124–193 (PLSN…SMPA). The C2 domain maps to 15-123 (TTTTSSPSSD…LHANGEAKWY (109 aa)). Low complexity predominate over residues 140-149 (ITNSNNKDNN). The segment covering 159–172 (AQEKGDEDQHHSAD) has biased composition (basic and acidic residues). 2 domain III regions span residues 458-489 (EGTY…NATF) and 498-633 (EVEQ…ISLD).

This sequence belongs to the peptidase C2 family. As to quaternary structure, monomer. Undergoes autolytic cleavage between Pro-192 and Ala-193.

The protein localises to the cytoplasm. The protein resides in the cytosol. In terms of biological role, has a weak caseinolytic activity. The protein is Putative calpain-like cysteine protease A (cplA) of Dictyostelium discoideum (Social amoeba).